The chain runs to 185 residues: Elongation factor P 1 (185 aa).

It belongs to the elongation factor P family.

The protein localises to the cytoplasm. The protein operates within protein biosynthesis; polypeptide chain elongation. Its function is as follows. Involved in peptide bond synthesis. Stimulates efficient translation and peptide-bond synthesis on native or reconstituted 70S ribosomes in vitro. Probably functions indirectly by altering the affinity of the ribosome for aminoacyl-tRNA, thus increasing their reactivity as acceptors for peptidyl transferase. This is Elongation factor P 1 (efp1) from Chlamydia caviae (strain ATCC VR-813 / DSM 19441 / 03DC25 / GPIC) (Chlamydophila caviae).